The sequence spans 262 residues: Type III pantothenate kinase (262 aa).

9-16 (DAGNSRIK) is a binding site for ATP. Substrate contacts are provided by residues tyrosine 96 and 103–106 (GSDR). Aspartate 105 functions as the Proton acceptor in the catalytic mechanism. Threonine 129 contacts ATP. Threonine 189 is a binding site for substrate.

This sequence belongs to the type III pantothenate kinase family. As to quaternary structure, homodimer. The cofactor is NH4(+). It depends on K(+) as a cofactor.

The protein resides in the cytoplasm. It carries out the reaction (R)-pantothenate + ATP = (R)-4'-phosphopantothenate + ADP + H(+). The protein operates within cofactor biosynthesis; coenzyme A biosynthesis; CoA from (R)-pantothenate: step 1/5. Functionally, catalyzes the phosphorylation of pantothenate (Pan), the first step in CoA biosynthesis. This chain is Type III pantothenate kinase, found in Burkholderia vietnamiensis (strain G4 / LMG 22486) (Burkholderia cepacia (strain R1808)).